The chain runs to 202 residues: Large ribosomal subunit protein bL17 (202 aa).

A disordered region spans residues 148–202 (DEAPAAESTDAAQVEAGGVEQPDTLPDADAPATADEGVEVDAAEVDPSDEKKDQA). Residues 169–182 (PDTLPDADAPATAD) are compositionally biased toward low complexity. The span at 183–194 (EGVEVDAAEVDP) shows a compositional bias: acidic residues.

This sequence belongs to the bacterial ribosomal protein bL17 family. In terms of assembly, part of the 50S ribosomal subunit. Contacts protein L32.

The sequence is that of Large ribosomal subunit protein bL17 from Kineococcus radiotolerans (strain ATCC BAA-149 / DSM 14245 / SRS30216).